Consider the following 390-residue polypeptide: Chalcone synthase (390 aa).

Cysteine 164 is a catalytic residue.

It belongs to the thiolase-like superfamily. Chalcone/stilbene synthases family.

It carries out the reaction (E)-4-coumaroyl-CoA + 3 malonyl-CoA + 3 H(+) = 2',4,4',6'-tetrahydroxychalcone + 3 CO2 + 4 CoA. Its pathway is secondary metabolite biosynthesis; flavonoid biosynthesis. Functionally, the primary product of this enzyme is 4,2',4',6'-tetrahydroxychalcone (also termed naringenin-chalcone or chalcone) which can under specific conditions spontaneously isomerize into naringenin. The chain is Chalcone synthase (CHS) from Onobrychis viciifolia (Common sainfoin).